Reading from the N-terminus, the 461-residue chain is Gustatory and pheromone receptor 32a (461 aa).

At 1-100 the chain is on the cytoplasmic side; it reads MSPNTWVIEM…YSFFVRGVVH (100 aa). A helical transmembrane segment spans residues 101-121; the sequence is ALTIFNVYSLFTPISAQLFFS. At 122 to 127 the chain is on the extracellular side; sequence YRETDN. The chain crosses the membrane as a helical span at residues 128–148; sequence VNQWIELLLCILTYTLTVFVC. Residues 149–180 lie on the Cytoplasmic side of the membrane; sequence AHNTTSMLRIMNEILQLDEEVRRQFGANLSQN. A helical transmembrane segment spans residues 181-201; that stretch reads FGFLVKFLVGITACQAYIIVL. Residues 202–214 are Extracellular-facing; the sequence is KIYAVQGEITPTS. Residues 215 to 235 form a helical membrane-spanning segment; sequence YILLAFYGIQNGLTATYIVFA. Over 236 to 317 the chain is Cytoplasmic; it reads SALLRIVYIR…YKGINDCCNL (82 aa). Residues 318–338 form a helical membrane-spanning segment; sequence ILVSFLGYSFYTVTTNCYNLF. Residues 339–348 lie on the Extracellular side of the membrane; it reads VQITGKGMVS. Residues 349–369 form a helical membrane-spanning segment; sequence PNILQWCFAWLCLHVSLLALL. Over 370-414 the chain is Cytoplasmic; that stretch reads SRSCGLTTTEANATSQILARVYAKSKEYQNIIDKFLTKSIKQEVQ. The chain crosses the membrane as a helical span at residues 415–435; that stretch reads FTAYGFFAIDNSTLFKIFSAV. At 436 to 461 the chain is on the extracellular side; it reads TTYLVILIQFKQLEDSKVEDPVPEQT.

This sequence belongs to the insect chemoreceptor superfamily. Gustatory receptor (GR) family. Gr21a subfamily. Expressed in the adult labellar chemosensory neurons. Expressed in tarsal neurons for male-male courtship suppression. In larvae, is expressed in neurons of the terminal external chemosensory organ, and the dorsal and posterior external chemosensory organs.

It is found in the cell membrane. Its function is as follows. Gustatory receptor which mediates acceptance or avoidance behavior, depending on its substrates. Required for the response to N,N-Diethyl-meta-toluamide (DEET), the most widely used insect repellent worldwide. Functions as a pheromone receptor for a male inhibitory pheromone and promotes male-male aggression and suppresses male-male courtship. Also promotes preferentially virgin females courting over mated females. This chain is Gustatory and pheromone receptor 32a (Gr32a), found in Drosophila melanogaster (Fruit fly).